The sequence spans 1029 residues: Myosin phosphatase Rho-interacting protein (1029 aa).

Positions 1–387 are interaction with F-actin; that stretch reads MSAAKENPCR…DRRSTESSMT (387 aa). Positions 43–150 constitute a PH 1 domain; sequence KPIYGGWLLL…WLEMLMVYPR (108 aa). The interval 152–267 is disordered; sequence NKQNQKKKRK…GDRVDGGRKV (116 aa). Residues 179 to 195 show a composition bias toward low complexity; the sequence is SSSGGSSGSSSSSSSSS. Phosphoserine occurs at positions 198, 224, 226, 230, and 232. Residues 226-237 show a composition bias toward low complexity; the sequence is SPVQSPSQSQPP. A compositionally biased stretch (basic and acidic residues) spans 245–267; it reads TGLDSKEDENILSGDRVDGGRKV. Phosphoserine occurs at positions 271, 275, 294, and 297. 2 disordered regions span residues 279–306 and 333–383; these read AKQD…SRRS and PSSD…RSTE. At threonine 300 the chain carries Phosphothreonine. The segment covering 338-354 has biased composition (basic and acidic residues); the sequence is RQGRSERRAIPRKRDFA. Residue serine 369 is modified to Phosphoserine. A PH 2 domain is found at 391 to 487; sequence LNFKKGWLTK…WIQTIMKHVL (97 aa). The tract at residues 490 to 614 is disordered; it reads SAPDVTSSLP…NDGPGMEDTA (125 aa). Over residues 492 to 509 the composition is skewed to polar residues; sequence PDVTSSLPEGKNKSTSFD. The residue at position 497 (serine 497) is a Phosphoserine. Residues 527–550 are compositionally biased toward basic and acidic residues; the sequence is PEQKKSRARERRREGRSKTFDWAE. The tract at residues 550–828 is interaction with RHOA; that stretch reads EFRPIQQALA…SVQRELEVLS (279 aa). Positions 562-571 are enriched in polar residues; sequence RASTVGSSDS. The segment covering 583–592 has biased composition (basic and acidic residues); that stretch reads ELERERARRR. Residue serine 622 is modified to Phosphoserine. Threonine 650 carries the post-translational modification Phosphothreonine. Positions 675–979 form a coiled coil; that stretch reads STHELTSLLE…LKAATEALGE (305 aa). Serine 804 is subject to Phosphoserine. The segment at 828-883 is interaction with PPP1R12A; that stretch reads SEQYSQKCLENAHLAQALEAERQALRQCQRENQELNAHNQELNNRLAAEITRLRTL. Residues serine 981, serine 997, serine 1018, and serine 1020 each carry the phosphoserine modification.

Binds RHOA, PPP1R12A/MBS and PPP1R12C/MBS85 through adjacent coiled coil domains. Interacts with MYZAP. Binds F-actin through its N-terminus.

It is found in the cytoplasm. Its subcellular location is the cytoskeleton. Its function is as follows. Targets myosin phosphatase to the actin cytoskeleton. Required for the regulation of the actin cytoskeleton by RhoA and ROCK1. Depletion leads to an increased number of stress fibers in smooth muscle cells through stabilization of actin fibers by phosphorylated myosin. Overexpression of MRIP as well as its F-actin-binding region leads to disassembly of stress fibers in neuronal cells. This chain is Myosin phosphatase Rho-interacting protein (Mprip), found in Rattus norvegicus (Rat).